The following is a 162-amino-acid chain: tRNA (cytidine(34)-2'-O)-methyltransferase (162 aa).

Residues L83, G105, I127, and S135 each contribute to the S-adenosyl-L-methionine site.

Belongs to the class IV-like SAM-binding methyltransferase superfamily. RNA methyltransferase TrmH family. TrmL subfamily. Homodimer.

The protein localises to the cytoplasm. The catalysed reaction is cytidine(34) in tRNA + S-adenosyl-L-methionine = 2'-O-methylcytidine(34) in tRNA + S-adenosyl-L-homocysteine + H(+). It catalyses the reaction 5-carboxymethylaminomethyluridine(34) in tRNA(Leu) + S-adenosyl-L-methionine = 5-carboxymethylaminomethyl-2'-O-methyluridine(34) in tRNA(Leu) + S-adenosyl-L-homocysteine + H(+). In terms of biological role, methylates the ribose at the nucleotide 34 wobble position in the two leucyl isoacceptors tRNA(Leu)(CmAA) and tRNA(Leu)(cmnm5UmAA). Catalyzes the methyl transfer from S-adenosyl-L-methionine to the 2'-OH of the wobble nucleotide. This Photorhabdus asymbiotica subsp. asymbiotica (strain ATCC 43949 / 3105-77) (Xenorhabdus luminescens (strain 2)) protein is tRNA (cytidine(34)-2'-O)-methyltransferase.